The primary structure comprises 264 residues: Acetylglutamate kinase (264 aa).

Substrate contacts are provided by residues 50–51 (GG), R72, and N164.

Belongs to the acetylglutamate kinase family. ArgB subfamily.

The protein resides in the cytoplasm. The enzyme catalyses N-acetyl-L-glutamate + ATP = N-acetyl-L-glutamyl 5-phosphate + ADP. Its pathway is amino-acid biosynthesis; L-arginine biosynthesis; N(2)-acetyl-L-ornithine from L-glutamate: step 2/4. Its function is as follows. Catalyzes the ATP-dependent phosphorylation of N-acetyl-L-glutamate. The protein is Acetylglutamate kinase of Moritella profunda.